The primary structure comprises 902 residues: Histone-lysine N-methyltransferase CLF (902 aa).

Residues 1 to 14 (MASEASPSSSATRS) are compositionally biased toward low complexity. 3 disordered regions span residues 1–33 (MASE…KEVS), 73–107 (SMER…SNNN), and 335–522 (GKTG…FMGE). Composition is skewed to basic and acidic residues over residues 15–33 (EPPK…KEVS) and 78–95 (GSCK…RDSP). The segment covering 337-357 (TGTSSDGAGTKTTPTKFSSKL) has biased composition (polar residues). Positions 394–403 (DKVSSSPKVK) are enriched in low complexity. Residues 404–416 (GSGRRVGRKRNKN) show a composition bias toward basic residues. Residues 438 to 449 (SDSIASGSCSPS) are compositionally biased toward low complexity. Positions 459 to 473 (ATSSSQKHVKSGNSG) are enriched in polar residues. One can recognise an SANT domain in the interval 531–581 (TNKLWRPLEKSLFDKGVEIFGMNSCLIARNLLSGFKSCWEVFQYMTCSENK). The 100-residue stretch at 638 to 737 (RKRITEKKDQ…SLGVPSQRGD (100 aa)) folds into the CXC domain. The SET domain occupies 752–867 (QRVLLGISDV…AGEELFYDYR (116 aa)). S-adenosyl-L-methionine is bound at residue Tyr866. Positions 875-890 (AWAKKPEAPGSKKDEN) are enriched in basic and acidic residues. Residues 875–902 (AWAKKPEAPGSKKDENVTPSVGRPKKLA) are disordered.

Belongs to the class V-like SAM-binding methyltransferase superfamily. Histone-lysine methyltransferase family. EZ subfamily. Probable component of a PcG complex. In plants, PcG complexes are probably composed of a member of the EZ family (CLF or MEA), FIE, and a member of the VEFS family (FIS2, VRN2 or EMF2). Interacts with FIE. Interacts with RING1A. Binds to ALP1. Interacts with BLI. Binds to ATX1 in the nucleus. Interacts with EOL1. Interacts (via SANT domain) with HXK1 in the nucleus. As to expression, strongly expressed throughout the apical meristem, leaf primordia, and leaves of 7-8 day-old seedling. Weakly expressed in the vasculature of hypocotyl. Strongly expressed throughout the young stages 1 and 2 floral meristems that arose on the flanks of the apex. In stage 3 and 4 flowers, it is expressed in the emerging sepal primordia and in the dome of the floral meristem. During stages 6 and 7, it is strongly expressed in developing petal and stamen, and weakly expressed in the sepals. Late in floral development, at stage 12, it is weakly expressed in all floral whorls, and expressed at intermediate level in petals and ovules.

It is found in the nucleus. It carries out the reaction L-lysyl-[histone] + S-adenosyl-L-methionine = N(6)-methyl-L-lysyl-[histone] + S-adenosyl-L-homocysteine + H(+). Polycomb group (PcG) protein. Catalytic subunit of some PcG multiprotein complex, which methylates 'Lys-27' of histone H3, leading to transcriptional repression of the affected target genes, mainly abscisic acid (ABA) responsive elements. Required to regulate floral development by repressing the AGAMOUS homeotic gene in leaves, inflorescence stems and flowers. Together with ATX1, modulates AG nucleosome methylation statement. Regulates the antero-posterior organization of the endosperm, as well as the division and elongation rates of leaf cells. PcG proteins act by forming multiprotein complexes, which are required to maintain the transcriptionally repressive state of homeotic genes throughout development. PcG proteins are not required to initiate repression, but to maintain it during later stages of development. Forms a nuclear complex with EZA1/SWN and HXK1 to target common glucose-responsive genes and regulate glucose signaling by glucose-mediated gene repression. Affects the recruitment of HXK1 to the target chromatin. In Arabidopsis thaliana (Mouse-ear cress), this protein is Histone-lysine N-methyltransferase CLF.